A 440-amino-acid polypeptide reads, in one-letter code: tRNA modification GTPase MnmE (440 aa).

(6S)-5-formyl-5,6,7,8-tetrahydrofolate contacts are provided by R22, E79, and K118. Residues 214-366 (GLIFTILGKP…LKTMLEAEAR (153 aa)) form the TrmE-type G domain. GTP is bound by residues 224–229 (NAGKSS), 243–249 (SSQPGTT), and 268–271 (DTAG). Mg(2+) is bound by residues S228 and T249. K440 lines the (6S)-5-formyl-5,6,7,8-tetrahydrofolate pocket.

The protein belongs to the TRAFAC class TrmE-Era-EngA-EngB-Septin-like GTPase superfamily. TrmE GTPase family. As to quaternary structure, homodimer. Heterotetramer of two MnmE and two MnmG subunits. It depends on K(+) as a cofactor.

Its subcellular location is the cytoplasm. In terms of biological role, exhibits a very high intrinsic GTPase hydrolysis rate. Involved in the addition of a carboxymethylaminomethyl (cmnm) group at the wobble position (U34) of certain tRNAs, forming tRNA-cmnm(5)s(2)U34. The sequence is that of tRNA modification GTPase MnmE from Granulibacter bethesdensis (strain ATCC BAA-1260 / CGDNIH1).